We begin with the raw amino-acid sequence, 89 residues long: Small ribosomal subunit protein bS20 (89 aa).

It belongs to the bacterial ribosomal protein bS20 family.

Binds directly to 16S ribosomal RNA. The sequence is that of Small ribosomal subunit protein bS20 from Solidesulfovibrio magneticus (strain ATCC 700980 / DSM 13731 / RS-1) (Desulfovibrio magneticus).